The following is a 443-amino-acid chain: Trigger factor (443 aa).

Residues 169 to 254 form the PPIase FKBP-type domain; it reads GDIAFLDFSG…LNSIKEVQLP (86 aa).

This sequence belongs to the FKBP-type PPIase family. Tig subfamily.

The protein localises to the cytoplasm. The enzyme catalyses [protein]-peptidylproline (omega=180) = [protein]-peptidylproline (omega=0). Involved in protein export. Acts as a chaperone by maintaining the newly synthesized protein in an open conformation. Functions as a peptidyl-prolyl cis-trans isomerase. In Mycoplasmoides gallisepticum (strain R(low / passage 15 / clone 2)) (Mycoplasma gallisepticum), this protein is Trigger factor.